We begin with the raw amino-acid sequence, 215 residues long: uncharacterized protein (215 aa).

This sequence to T.pallidum TP_0127, TP_0618 and TP_0619.

This is an uncharacterized protein from Treponema pallidum (strain Nichols).